The sequence spans 371 residues: RxLR effector protein PITG_12731 (371 aa).

A signal peptide spans 1-24 (MRFYSVLLTIVTLIASTYDAKVNA). The short motif at 43 to 53 (RMLRADHADER) is the RxLR-dEER element.

This sequence belongs to the RxLR effector family.

The protein resides in the secreted. The protein localises to the host nucleus. It is found in the host cytoplasm. Effector that enhances P.infestans colonization of Nicotiana benthamiana leaves. The polypeptide is RxLR effector protein PITG_12731 (Phytophthora infestans (strain T30-4) (Potato late blight agent)).